Consider the following 156-residue polypeptide: Cyclic pyranopterin monophosphate synthase (156 aa).

Residues 73-75 (LCH) and 110-111 (ME) contribute to the substrate site. Aspartate 125 is an active-site residue.

Belongs to the MoaC family. Homohexamer; trimer of dimers.

The enzyme catalyses (8S)-3',8-cyclo-7,8-dihydroguanosine 5'-triphosphate = cyclic pyranopterin phosphate + diphosphate. The protein operates within cofactor biosynthesis; molybdopterin biosynthesis. Its function is as follows. Catalyzes the conversion of (8S)-3',8-cyclo-7,8-dihydroguanosine 5'-triphosphate to cyclic pyranopterin monophosphate (cPMP). The protein is Cyclic pyranopterin monophosphate synthase of Stutzerimonas stutzeri (strain A1501) (Pseudomonas stutzeri).